A 701-amino-acid chain; its full sequence is Ribosomal RNA large subunit methyltransferase K/L (701 aa).

Residues 43–154 form the THUMP domain; sequence LLYQSLMWSR…KETAHISLDL (112 aa).

Belongs to the methyltransferase superfamily. RlmKL family.

The protein resides in the cytoplasm. It carries out the reaction guanosine(2445) in 23S rRNA + S-adenosyl-L-methionine = N(2)-methylguanosine(2445) in 23S rRNA + S-adenosyl-L-homocysteine + H(+). The catalysed reaction is guanosine(2069) in 23S rRNA + S-adenosyl-L-methionine = N(2)-methylguanosine(2069) in 23S rRNA + S-adenosyl-L-homocysteine + H(+). Its function is as follows. Specifically methylates the guanine in position 2445 (m2G2445) and the guanine in position 2069 (m7G2069) of 23S rRNA. This chain is Ribosomal RNA large subunit methyltransferase K/L, found in Klebsiella pneumoniae (strain 342).